Consider the following 262-residue polypeptide: Hydroxyethylthiazole kinase (262 aa).

Methionine 40 provides a ligand contact to substrate. Residues lysine 116 and threonine 162 each contribute to the ATP site. Glycine 189 lines the substrate pocket.

This sequence belongs to the Thz kinase family. Mg(2+) is required as a cofactor.

The catalysed reaction is 5-(2-hydroxyethyl)-4-methylthiazole + ATP = 4-methyl-5-(2-phosphooxyethyl)-thiazole + ADP + H(+). Its pathway is cofactor biosynthesis; thiamine diphosphate biosynthesis; 4-methyl-5-(2-phosphoethyl)-thiazole from 5-(2-hydroxyethyl)-4-methylthiazole: step 1/1. Catalyzes the phosphorylation of the hydroxyl group of 4-methyl-5-beta-hydroxyethylthiazole (THZ). The chain is Hydroxyethylthiazole kinase from Clostridioides difficile (strain 630) (Peptoclostridium difficile).